Here is a 70-residue protein sequence, read N- to C-terminus: DNA-directed RNA polymerase subunit omega (70 aa).

It belongs to the RNA polymerase subunit omega family. As to quaternary structure, the RNAP catalytic core consists of 2 alpha, 1 beta, 1 beta' and 1 omega subunit. When a sigma factor is associated with the core the holoenzyme is formed, which can initiate transcription.

The catalysed reaction is RNA(n) + a ribonucleoside 5'-triphosphate = RNA(n+1) + diphosphate. In terms of biological role, promotes RNA polymerase assembly. Latches the N- and C-terminal regions of the beta' subunit thereby facilitating its interaction with the beta and alpha subunits. The protein is DNA-directed RNA polymerase subunit omega of Bacillus anthracis.